Reading from the N-terminus, the 353-residue chain is Phosphoribosylformylglycinamidine cyclo-ligase (353 aa).

This sequence belongs to the AIR synthase family.

It localises to the cytoplasm. The enzyme catalyses 2-formamido-N(1)-(5-O-phospho-beta-D-ribosyl)acetamidine + ATP = 5-amino-1-(5-phospho-beta-D-ribosyl)imidazole + ADP + phosphate + H(+). The protein operates within purine metabolism; IMP biosynthesis via de novo pathway; 5-amino-1-(5-phospho-D-ribosyl)imidazole from N(2)-formyl-N(1)-(5-phospho-D-ribosyl)glycinamide: step 2/2. The chain is Phosphoribosylformylglycinamidine cyclo-ligase from Methylocella silvestris (strain DSM 15510 / CIP 108128 / LMG 27833 / NCIMB 13906 / BL2).